Here is a 79-residue protein sequence, read N- to C-terminus: UPF0180 protein BCG9842_B3897 (79 aa).

It belongs to the UPF0180 family.

In Bacillus cereus (strain G9842), this protein is UPF0180 protein BCG9842_B3897.